An 84-amino-acid chain; its full sequence is Beta-toxin Ct16 (84 aa).

Positions 1 to 19 (MNYFILLFVATFLLLDVNC) are cleaved as a signal peptide. The LCN-type CS-alpha/beta domain maps to 21-80 (KDGYPVDANNCKFECWKNEYCDELCKAKRAESGYCYKLKLSCWCEGLPDDEPTKTSDRCY). Cystine bridges form between cysteine 31–cysteine 79, cysteine 35–cysteine 55, cysteine 41–cysteine 62, and cysteine 45–cysteine 64. At threonine 82 the chain carries Threonine amide.

The protein belongs to the long (4 C-C) scorpion toxin superfamily. Sodium channel inhibitor family. Alpha subfamily. In terms of tissue distribution, expressed by the venom gland.

Its subcellular location is the secreted. Its function is as follows. Alpha toxins bind voltage-independently at site-3 of sodium channels (Nav) and inhibit the inactivation of the activated channels, thereby blocking neuronal transmission. Is possibly toxic to mice. The polypeptide is Beta-toxin Ct16 (Centruroides tecomanus (Scorpion)).